The chain runs to 355 residues: Blue-sensitive opsin (355 aa).

Over 1 to 41 (MKSRPQEFQEDFYIPIPLDTNNITALSPFLVPQDHLGGSGI) the chain is Extracellular. The N-linked (GlcNAc...) asparagine glycan is linked to N22. Residues 42–66 (FMIMTVFMLFLFIGGTSINVLTIVC) traverse the membrane as a helical segment. Residues 67-78 (TVQYKKLRSHLN) are Cytoplasmic-facing. A helical membrane pass occupies residues 79–104 (YILVNLAISNLLVSTVGSFTAFVSFL). Residues 105 to 118 (NRYFIFGPTACKIE) lie on the Extracellular side of the membrane. A disulfide bridge connects residues C115 and C192. The helical transmembrane segment at 119 to 138 (GFVATLGGMVSLWSLSVVAF) threads the bilayer. The Cytoplasmic portion of the chain corresponds to 139–157 (ERWLVICKPVGNFSFKGTH). A helical membrane pass occupies residues 158–181 (AIIGCALTWFFALLASTPPLFGWS). At 182–207 (RYIPEGLQCSCGPDWYTTENKYNNES) the chain is on the extracellular side. A glycan (N-linked (GlcNAc...) asparagine) is linked at N205. The chain crosses the membrane as a helical span at residues 208-235 (YVMFLFCFCFGFPFTVILFCYGQLLFTL). The Cytoplasmic segment spans residues 236 to 257 (KSAAKAQADSASTQKAEREVTK). A helical transmembrane segment spans residues 258-281 (MVVVMVMGFLVCWLPYASFALWVV). Residues 282-289 (FNRGQSFD) lie on the Extracellular side of the membrane. The helical transmembrane segment at 290–314 (LRLGTIPSCFSKASTVYNPVIYVFM) threads the bilayer. K301 carries the post-translational modification N6-(retinylidene)lysine. Residues 315-355 (NKQFRSCMMKLIFCGKSPFGDDEEASSSSQVTQVSSVGPEK) are Cytoplasmic-facing. A disordered region spans residues 334–355 (GDDEEASSSSQVTQVSSVGPEK). Low complexity predominate over residues 340–355 (SSSSQVTQVSSVGPEK).

Belongs to the G-protein coupled receptor 1 family. Opsin subfamily. Post-translationally, phosphorylated on some or all of the serine and threonine residues present in the C-terminal region. As to expression, the color pigments are found in the cone photoreceptor cells.

The protein localises to the membrane. In terms of biological role, visual pigments are the light-absorbing molecules that mediate vision. They consist of an apoprotein, opsin, covalently linked to cis-retinal. In Psalidodon fasciatus (Banded astyanax), this protein is Blue-sensitive opsin (B23).